The primary structure comprises 344 residues: DNA-directed RNA polymerase subunit alpha (344 aa).

Residues 1-238 (MKVIKTAPLI…KQLGVFGERP (238 aa)) are alpha N-terminal domain (alpha-NTD). The tract at residues 254-344 (AKDLSAKIES…EKLEDKGGND (91 aa)) is alpha C-terminal domain (alpha-CTD).

Belongs to the RNA polymerase alpha chain family. As to quaternary structure, homodimer. The RNAP catalytic core consists of 2 alpha, 1 beta, 1 beta' and 1 omega subunit. When a sigma factor is associated with the core the holoenzyme is formed, which can initiate transcription.

The catalysed reaction is RNA(n) + a ribonucleoside 5'-triphosphate = RNA(n+1) + diphosphate. Its function is as follows. DNA-dependent RNA polymerase catalyzes the transcription of DNA into RNA using the four ribonucleoside triphosphates as substrates. This is DNA-directed RNA polymerase subunit alpha from Helicobacter pylori (strain ATCC 700392 / 26695) (Campylobacter pylori).